A 65-amino-acid chain; its full sequence is Lantibiotic lacticin 3147 A2 (65 aa).

The propeptide occupies 1–36 (MKEKNMKKNDTIELQLGKYLEDDMIELAEGDESHGG). At threonine 37 the chain carries 2-oxobutanoic acid. Threonine 38 and threonine 41 each carry 2,3-didehydrobutyrine. Residues serine 45 and serine 48 each carry the 2,3-didehydroalanine (Ser) modification. The segment at residues 52–56 (STNTC) is a cross-link (lanthionine (Ser-Cys)). 2 consecutive cross-links (beta-methyllanthionine (Thr-Cys)) follow at residues 58 to 61 (TTKC) and 62 to 65 (TRAC).

In terms of processing, maturation of lantibiotics involves the enzymatic conversion of Thr, and Ser into dehydrated AA and the formation of thioether bonds with cysteine. This is followed by membrane translocation and cleavage of the modified precursor. Post-translationally, it is not established whether the 2,3-didehydrobutyrines are the E- or Z-isomers. In the NMR model they were assumed to be the Z-isomer.

The protein localises to the secreted. Lanthionine-containing peptide antibiotic (lantibiotic) active on Gram-positive bacteria. The bactericidal activity of lantibiotics is based on depolarization of energized bacterial cytoplasmic membranes, initiated by the formation of aqueous transmembrane pores. When present individually lacticin 3147 A2 exhibits weak activity towards L.lactis strain AM2 and L.lactis strain HP, and no activity towards L.lactis strain IFPL359, but when combined with lacticin 3147 A1 it displays strong activity towards all three strains. The protein is Lantibiotic lacticin 3147 A2 of Lactococcus lactis subsp. lactis (Streptococcus lactis).